A 792-amino-acid polypeptide reads, in one-letter code: Probable exo-1,4-beta-xylosidase xlnD (792 aa).

The signal sequence occupies residues 1–20; that stretch reads MSVAKSIAAVLVALLPGALA. 5 N-linked (GlcNAc...) asparagine glycosylation sites follow: Asn23, Asn87, Asn118, Asn142, and Asn246. The active site involves Asp310. Residues Asn326, Asn385, Asn404, Asn440, Asn477, Asn518, Asn679, and Asn701 are each glycosylated (N-linked (GlcNAc...) asparagine).

It belongs to the glycosyl hydrolase 3 family.

Its subcellular location is the secreted. It catalyses the reaction Hydrolysis of (1-&gt;4)-beta-D-xylans, to remove successive D-xylose residues from the non-reducing termini.. The protein operates within glycan degradation; xylan degradation. Xylan 1,4-beta-xylosidase involved in the hydrolysis of xylan, a major structural heterogeneous polysaccharide found in plant biomass representing the second most abundant polysaccharide in the biosphere, after cellulose. The sequence is that of Probable exo-1,4-beta-xylosidase xlnD (xlnD) from Aspergillus fumigatus (strain CBS 144.89 / FGSC A1163 / CEA10) (Neosartorya fumigata).